The primary structure comprises 728 residues: 1,4-alpha-glucan branching enzyme GlgB (728 aa).

The Nucleophile role is filled by D405. The active-site Proton donor is E458. Positions 686-712 are disordered; it reads YHGSNAGNAGAVQSDEHESHGRPHSLS.

Belongs to the glycosyl hydrolase 13 family. GlgB subfamily. In terms of assembly, monomer.

The catalysed reaction is Transfers a segment of a (1-&gt;4)-alpha-D-glucan chain to a primary hydroxy group in a similar glucan chain.. The protein operates within glycan biosynthesis; glycogen biosynthesis. Its function is as follows. Catalyzes the formation of the alpha-1,6-glucosidic linkages in glycogen by scission of a 1,4-alpha-linked oligosaccharide from growing alpha-1,4-glucan chains and the subsequent attachment of the oligosaccharide to the alpha-1,6 position. In Enterobacter sp. (strain 638), this protein is 1,4-alpha-glucan branching enzyme GlgB.